Consider the following 154-residue polypeptide: Large ribosomal subunit protein uL22c (154 aa).

It belongs to the universal ribosomal protein uL22 family. As to quaternary structure, part of the 50S ribosomal subunit.

It is found in the plastid. The protein resides in the chloroplast. In terms of biological role, this protein binds specifically to 23S rRNA. The globular domain of the protein is located near the polypeptide exit tunnel on the outside of the subunit, while an extended beta-hairpin is found that lines the wall of the exit tunnel in the center of the 70S ribosome. The chain is Large ribosomal subunit protein uL22c (rpl22) from Helianthus annuus (Common sunflower).